A 317-amino-acid chain; its full sequence is Aspartate carbamoyltransferase catalytic subunit (317 aa).

Residues Arg-66 and Thr-67 each coordinate carbamoyl phosphate. Lys-94 is a binding site for L-aspartate. Carbamoyl phosphate contacts are provided by Arg-116, His-144, and Gln-147. 2 residues coordinate L-aspartate: Arg-177 and Arg-231. Carbamoyl phosphate is bound by residues Gly-272 and Pro-273.

This sequence belongs to the aspartate/ornithine carbamoyltransferase superfamily. ATCase family. As to quaternary structure, heterododecamer (2C3:3R2) of six catalytic PyrB chains organized as two trimers (C3), and six regulatory PyrI chains organized as three dimers (R2).

It carries out the reaction carbamoyl phosphate + L-aspartate = N-carbamoyl-L-aspartate + phosphate + H(+). It functions in the pathway pyrimidine metabolism; UMP biosynthesis via de novo pathway; (S)-dihydroorotate from bicarbonate: step 2/3. In terms of biological role, catalyzes the condensation of carbamoyl phosphate and aspartate to form carbamoyl aspartate and inorganic phosphate, the committed step in the de novo pyrimidine nucleotide biosynthesis pathway. In Rhodopseudomonas palustris (strain ATCC BAA-98 / CGA009), this protein is Aspartate carbamoyltransferase catalytic subunit.